The chain runs to 299 residues: Circadian clock oscillator protein KaiA (299 aa).

The tract at residues 1–135 (MQSPLSLCLF…LHLGPICTLP (135 aa)) is psR domain, binds oxidized quinones. Residues 1–169 (MQSPLSLCLF…RLADKLKERL (169 aa)) enclose the KaiA N-terminal domain. Positions 170–178 (GYLGVYYKR) are flexible linker. Positions 179 to 287 (KPSHFYRNFS…GEMYRRSIPR (109 aa)) constitute a KaiA C-terminal domain.

Belongs to the KaiA family. As to quaternary structure, homodimer. The KaiABC1 complex composition changes during the circadian cycle to control KaiC1 phosphorylation. Complexes KaiC1(6), KaiA(2-4):KaiC1(6), KaiB(6):KaiC1(6) and KaiC1(6):KaiB(6):KaiA(12) are among the most important forms, many form cooperatively. KaiA and CikA bind to the same region of the KaiB(fs) form and therefore compete. Interacts with KaiC1 but not KaiC2 or KaiC3. Interacts with itself, not seen to interact with other Kai proteins.

Its function is as follows. Key component of the KaiABC oscillator complex, which constitutes the main circadian regulator in cyanobacteria. Complex composition changes during the circadian cycle to control KaiC phosphorylation. KaiA stimulates KaiC autophosphorylation, while KaiB sequesters KaiA, leading to KaiC autodephosphorylation. KaiA binding to the KaiC CII domain during the subjective day yields KaiA(2-4):KaiC(6) complexes which stimulate KaiC autophosphorylation. Phospho-Ser-431 KaiC accumulation triggers binding of KaiB during the subjective night to form the KaiB(6):KaiC(6) complex, leading to changes in the output regulators CikA and SasA. KaiB(6):KaiC(6) formation exposes a site for KaiA binding on KaiB that sequesters KaiA from KaiC's CII domain, making the KaiC(6):KaiB(6):KaiA(12) complex resulting in KaiC autodephosphorylation. Complete dephosphorylation of KaiC leads to dissociation of KaiA(2):KaiB(1), completing 1 cycle of the Kai oscillator. In terms of biological role, component of the oscillator and circadian clock in this organism, enhances fitness in a rhythmic environment. Stimulates KaiC1 to autophosphorylate, has no effect on the kinase activity of KaiC2 or KaiC3. Functionally, binds oxidized quinones via the N-terminal PsR domain, allowing it to sense redox changes and possibly mediate clock input. This chain is Circadian clock oscillator protein KaiA, found in Synechocystis sp. (strain ATCC 27184 / PCC 6803 / Kazusa).